Consider the following 487-residue polypeptide: UDP-N-acetylmuramoyl-L-alanyl-D-glutamate--2,6-diaminopimelate ligase (487 aa).

S30 serves as a coordination point for UDP-N-acetyl-alpha-D-muramoyl-L-alanyl-D-glutamate. Residue G109–S115 participates in ATP binding. UDP-N-acetyl-alpha-D-muramoyl-L-alanyl-D-glutamate-binding positions include T151 to T152, S178, and R186. K218 is subject to N6-carboxylysine. Residues R379, D403 to R406, G455, and E459 each bind meso-2,6-diaminopimelate. Positions D403–R406 match the Meso-diaminopimelate recognition motif motif.

It belongs to the MurCDEF family. MurE subfamily. Requires Mg(2+) as cofactor. Carboxylation is probably crucial for Mg(2+) binding and, consequently, for the gamma-phosphate positioning of ATP.

The protein resides in the cytoplasm. The catalysed reaction is UDP-N-acetyl-alpha-D-muramoyl-L-alanyl-D-glutamate + meso-2,6-diaminopimelate + ATP = UDP-N-acetyl-alpha-D-muramoyl-L-alanyl-gamma-D-glutamyl-meso-2,6-diaminopimelate + ADP + phosphate + H(+). It functions in the pathway cell wall biogenesis; peptidoglycan biosynthesis. Its function is as follows. Catalyzes the addition of meso-diaminopimelic acid to the nucleotide precursor UDP-N-acetylmuramoyl-L-alanyl-D-glutamate (UMAG) in the biosynthesis of bacterial cell-wall peptidoglycan. The chain is UDP-N-acetylmuramoyl-L-alanyl-D-glutamate--2,6-diaminopimelate ligase from Alkaliphilus oremlandii (strain OhILAs) (Clostridium oremlandii (strain OhILAs)).